Reading from the N-terminus, the 393-residue chain is MDLVEKLKNDVKEIEDWIIQIRRKIHENPELSYKEYSTSKLVAETLRKLGIEVEEGVGLPTAVVGKIRGNKPGKTVALRADMDALPVEETSDVEFKSKVKGVMHACGHDTHVAMLLGGAYLLVKNKDLISGEIRLIFQPAEEDGGLGGAKPMIEAGVMNGVDYVFGIHISSSYPSGVFATRKGPIMATPDAFKIVVHGKGGHGSAPHETIDPIFISLQIANAIYGITARQIDPVQPFVISITTIHSGTKDNIIPDDAEMQGTIRSLDENVRSKAKDYMRRIVSSICGIYGATCEVKFMEDVYPITVNNPEVTDEVMKILSSISTVVETEPVLGAEDFSRFLQKAPGMYFFLGTRNEKKGCIYPNHSSKFCVDEDVLKLGALAHALLAIKFSNK.

Residues histidine 104, aspartate 109, and histidine 245 each coordinate Zn(2+). Tyrosine 302 (proton donor) is an active-site residue. The active-site Nucleophile is the glutamate 373.

The protein belongs to the peptidase M20 family. Homotetramer. The cofactor is Zn(2+).

Its function is as follows. Can release basic, acidic, aromatic, and, to a lesser extent, aliphatic amino acids. This Saccharolobus solfataricus (strain ATCC 35092 / DSM 1617 / JCM 11322 / P2) (Sulfolobus solfataricus) protein is Thermostable carboxypeptidase 2 (cpsA2).